We begin with the raw amino-acid sequence, 163 residues long: Probable histone H2A.4 (163 aa).

Disordered regions lie at residues 1-30 (MEVGAKVPKKAGAGGRRGGGGPKKKPVSRS) and 134-163 (SAAAKEAKEGKTPKSPKKATTKSPKKAAAA). Positions 12–21 (GAGGRRGGGG) are enriched in gly residues. The span at 147-163 (KSPKKATTKSPKKAAAA) shows a compositional bias: basic residues. Short sequence motifs (SPKK motif) lie at residues 148–151 (SPKK) and 156–159 (SPKK).

This sequence belongs to the histone H2A family. In terms of assembly, the nucleosome is a histone octamer containing two molecules each of H2A, H2B, H3 and H4 assembled in one H3-H4 heterotetramer and two H2A-H2B heterodimers. The octamer wraps approximately 147 bp of DNA.

The protein localises to the nucleus. The protein resides in the chromosome. Core component of nucleosome. Nucleosomes wrap and compact DNA into chromatin, limiting DNA accessibility to the cellular machineries which require DNA as a template. Histones thereby play a central role in transcription regulation, DNA repair, DNA replication and chromosomal stability. DNA accessibility is regulated via a complex set of post-translational modifications of histones, also called histone code, and nucleosome remodeling. The chain is Probable histone H2A.4 from Oryza sativa subsp. indica (Rice).